The primary structure comprises 258 residues: Aspartate/glutamate leucyltransferase (258 aa).

Belongs to the R-transferase family. Bpt subfamily.

Its subcellular location is the cytoplasm. The catalysed reaction is N-terminal L-glutamyl-[protein] + L-leucyl-tRNA(Leu) = N-terminal L-leucyl-L-glutamyl-[protein] + tRNA(Leu) + H(+). It carries out the reaction N-terminal L-aspartyl-[protein] + L-leucyl-tRNA(Leu) = N-terminal L-leucyl-L-aspartyl-[protein] + tRNA(Leu) + H(+). Functionally, functions in the N-end rule pathway of protein degradation where it conjugates Leu from its aminoacyl-tRNA to the N-termini of proteins containing an N-terminal aspartate or glutamate. The protein is Aspartate/glutamate leucyltransferase of Bradyrhizobium sp. (strain ORS 278).